Reading from the N-terminus, the 78-residue chain is Acyl carrier protein (78 aa).

Positions 1-76 constitute a Carrier domain; the sequence is MALFEDIQAV…DVVKYIEDNK (76 aa). Serine 36 is subject to O-(pantetheine 4'-phosphoryl)serine.

The protein belongs to the acyl carrier protein (ACP) family. In terms of processing, 4'-phosphopantetheine is transferred from CoA to a specific serine of apo-ACP by AcpS. This modification is essential for activity because fatty acids are bound in thioester linkage to the sulfhydryl of the prosthetic group.

Its subcellular location is the cytoplasm. It functions in the pathway lipid metabolism; fatty acid biosynthesis. Its function is as follows. Carrier of the growing fatty acid chain in fatty acid biosynthesis. The polypeptide is Acyl carrier protein (Helicobacter acinonychis (strain Sheeba)).